The primary structure comprises 912 residues: MPGKSGLGWWWARLPLCLLLSLYGPWMPSSLGKPKGHPHMNSIRIDGDITLGGLFPVHGRGSEGKACGELKKEKGIHRLEAMLFALDRINNDPDLLPNITLGARILDTCSRDTHALEQSLTFVQALIEKDGTEVRCGSGGPPIITKPERVVGVIGASGSSVSIMVANILRLFKIPQISYASTAPDLSDNSRYDFFSRVVPSDTYQAQAMVDIVRALKWNYVSTVASEGSYGESGVEAFIQKSREDGGVCIAQSVKIPREPKAGEFDKIIRRLLETSNARAVIIFANEDDIRRVLEAARRANQTGHFFWMGSDSWGSKIAPVLHLEEVAEGAVTILPKRMSVRGFDRYFSSRTLDNNRRNIWFAEFWEDNFHCKLSRHALKKGSHVKKCTNRERIGQDSAYEQEGKVQFVIDAVYAMGHALHAMHRDLCPGRVGLCPRMDPVDGTQLLKYIRNVNFSGIAGNPVTFNENGDAPGRYDIYQYQLRNDSAEYKVIGSWTDHLHLRIERMHWPGSGQQLPRSICSLPCQPGERKKTVKGMPCCWHCEPCTGYQYQVDRYTCKTCPYDMRPTENRTGCRPIPIIKLEWDSPWAVLPLFLAVVGIAATLFVVITFVRYNDTPIVKASGRELSYVLLAGIFLCYATTFLMIAEPDLGTCSLRRIFLGLGMSISYAALLTKTNRIYRIFEQGKRSVSAPRFISPASQLAITFSLISLQLLGICVWFVVDPSHSVVDFQDQRTLDPRFARGVLKCDISDLSLICLLGYSMLLMVTCTVYAIKTRGVPETFNEAKPIGFTMYTTCIVWLAFIPIFFGTSQSADKLYIQTTTLTVSVSLSASVSLGMLYMPKVYIILFHPEQNVPKRKRSLKAVVTAATMSNKFTQKGNFRPNGEAKSELCENLEAPALATKQTYVTYTNHAI.

An N-terminal signal peptide occupies residues 1–32 (MPGKSGLGWWWARLPLCLLLSLYGPWMPSSLG). Over 33–586 (KPKGHPHMNS…PIIKLEWDSP (554 aa)) the chain is Extracellular. A disulfide bridge links C67 with C109. N98 carries N-linked (GlcNAc...) asparagine glycosylation. L-glutamate-binding positions include S159, 180–182 (AST), and Y230. Cystine bridges form between C249–C538, C372–C388, C428–C435, C520–C539, C524–C542, C545–C557, and C560–C573. N301 is a glycosylation site (N-linked (GlcNAc...) asparagine). Position 312 (D312) interacts with L-glutamate. Residue K405 participates in L-glutamate binding. N454 and N484 each carry an N-linked (GlcNAc...) asparagine glycan. N-linked (GlcNAc...) asparagine glycosylation is present at N569. The helical transmembrane segment at 587–607 (WAVLPLFLAVVGIAATLFVVI) threads the bilayer. Topologically, residues 608-624 (TFVRYNDTPIVKASGRE) are cytoplasmic. Residues 625 to 645 (LSYVLLAGIFLCYATTFLMIA) traverse the membrane as a helical segment. Residues 646–653 (EPDLGTCS) lie on the Extracellular side of the membrane. A helical transmembrane segment spans residues 654–671 (LRRIFLGLGMSISYAALL). Over 672–699 (TKTNRIYRIFEQGKRSVSAPRFISPASQ) the chain is Cytoplasmic. Residues 700 to 720 (LAITFSLISLQLLGICVWFVV) form a helical membrane-spanning segment. Over 721–751 (DPSHSVVDFQDQRTLDPRFARGVLKCDISDL) the chain is Extracellular. The helical transmembrane segment at 752–772 (SLICLLGYSMLLMVTCTVYAI) threads the bilayer. The Cytoplasmic segment spans residues 773–786 (KTRGVPETFNEAKP). The chain crosses the membrane as a helical span at residues 787–807 (IGFTMYTTCIVWLAFIPIFFG). At 808 to 826 (TSQSADKLYIQTTTLTVSV) the chain is on the extracellular side. Residues 827–847 (SLSASVSLGMLYMPKVYIILF) form a helical membrane-spanning segment. The Cytoplasmic segment spans residues 848–912 (HPEQNVPKRK…TYVTYTNHAI (65 aa)).

It belongs to the G-protein coupled receptor 3 family. Interacts with PICK1.

It is found in the cell membrane. Its function is as follows. G-protein coupled receptor for glutamate. Ligand binding causes a conformation change that triggers signaling via guanine nucleotide-binding proteins (G proteins) and modulates the activity of down-stream effectors. Signaling inhibits adenylate cyclase activity. The protein is Metabotropic glutamate receptor 4 (GRM4) of Macaca fascicularis (Crab-eating macaque).